A 206-amino-acid polypeptide reads, in one-letter code: MKIDITSVNGETAGSIDLDDAIFGLEPRVDLIARMIRYQLAKRRAGTHQSLGRADIHRTGKKMYKQKGTGSARHGSARAPQFRGGGKAFGPVARSHEHDLPKKIRALALKHALSAKAKDGGIIIWNDAKIPEAKTKGLKANFEKIGLTNALIIDGAELETNFSLAARNIPQIDVLPVQGINVYDIVRRDKLVLTTAAINALEARFK.

The tract at residues 63–85 (MYKQKGTGSARHGSARAPQFRGG) is disordered.

It belongs to the universal ribosomal protein uL4 family. Part of the 50S ribosomal subunit.

Its function is as follows. One of the primary rRNA binding proteins, this protein initially binds near the 5'-end of the 23S rRNA. It is important during the early stages of 50S assembly. It makes multiple contacts with different domains of the 23S rRNA in the assembled 50S subunit and ribosome. In terms of biological role, forms part of the polypeptide exit tunnel. This chain is Large ribosomal subunit protein uL4, found in Beijerinckia indica subsp. indica (strain ATCC 9039 / DSM 1715 / NCIMB 8712).